Reading from the N-terminus, the 261-residue chain is Cell division protein B (261 aa).

Positions 213-261 are winged-helix-like fold; the sequence is SEDMILNYIKTTGGFIDVDYIAKNFDVSKDEVFNVLRRLEEKGLIVLEG.

Interacts with CdvA. Interacts with CdvC.

The protein resides in the cytoplasm. It is found in the nucleoid. Its function is as follows. Part of a cell division machinery. The CdvA, CdvB and CdvC proteins polymerize between segregating nucleoids and persist throughout cell division, forming a successively smaller structure during constriction. The chain is Cell division protein B from Sulfolobus acidocaldarius (strain ATCC 33909 / DSM 639 / JCM 8929 / NBRC 15157 / NCIMB 11770).